The primary structure comprises 184 residues: Inosine triphosphate pyrophosphatase (184 aa).

An ITP-binding site is contributed by 9 to 14 (TSNASK). E38 is a Mg(2+) binding site. ITP is bound by residues K50, 66–67 (DT), K83, 142–145 (FGWD), K163, and 168–169 (HR).

This sequence belongs to the HAM1 NTPase family. In terms of assembly, homodimer. Requires Mg(2+) as cofactor. Mn(2+) is required as a cofactor.

It is found in the cytoplasm. The protein localises to the nucleus. It catalyses the reaction ITP + H2O = IMP + diphosphate + H(+). The catalysed reaction is dITP + H2O = dIMP + diphosphate + H(+). The enzyme catalyses XTP + H2O = XMP + diphosphate + H(+). Functionally, pyrophosphatase that hydrolyzes non-canonical purine nucleotides such as inosine triphosphate (ITP), deoxyinosine triphosphate (dITP) or xanthosine 5'-triphosphate (XTP) to their respective monophosphate derivatives. The enzyme does not distinguish between the deoxy- and ribose forms. Probably excludes non-canonical purines from RNA and DNA precursor pools, thus preventing their incorporation into RNA and DNA and avoiding chromosomal lesions. The protein is Inosine triphosphate pyrophosphatase of Tuber melanosporum (strain Mel28) (Perigord black truffle).